A 236-amino-acid polypeptide reads, in one-letter code: Small ribosomal subunit protein uS2c (236 aa).

Belongs to the universal ribosomal protein uS2 family.

The protein localises to the plastid. It localises to the chloroplast. This is Small ribosomal subunit protein uS2c (rps2) from Calycanthus floridus var. glaucus (Eastern sweetshrub).